Here is a 143-residue protein sequence, read N- to C-terminus: Peptide methionine sulfoxide reductase MsrB (143 aa).

A MsrB domain is found at D16–R139. Residues C55, C58, C104, and C107 each contribute to the Zn(2+) site. Catalysis depends on C128, which acts as the Nucleophile.

The protein belongs to the MsrB Met sulfoxide reductase family. It depends on Zn(2+) as a cofactor.

It catalyses the reaction L-methionyl-[protein] + [thioredoxin]-disulfide + H2O = L-methionyl-(R)-S-oxide-[protein] + [thioredoxin]-dithiol. The protein is Peptide methionine sulfoxide reductase MsrB of Burkholderia ambifaria (strain MC40-6).